The chain runs to 253 residues: Trans-aconitate 2-methyltransferase (253 aa).

It belongs to the methyltransferase superfamily. Tam family.

The protein resides in the cytoplasm. It carries out the reaction trans-aconitate + S-adenosyl-L-methionine = (E)-3-(methoxycarbonyl)pent-2-enedioate + S-adenosyl-L-homocysteine. Functionally, catalyzes the S-adenosylmethionine monomethyl esterification of trans-aconitate. This is Trans-aconitate 2-methyltransferase from Azoarcus sp. (strain BH72).